Here is a 306-residue protein sequence, read N- to C-terminus: Sulfate adenylyltransferase subunit 2 (306 aa).

Belongs to the PAPS reductase family. CysD subfamily. Heterodimer composed of CysD, the smaller subunit, and CysN.

The catalysed reaction is sulfate + ATP + H(+) = adenosine 5'-phosphosulfate + diphosphate. Its pathway is sulfur metabolism; hydrogen sulfide biosynthesis; sulfite from sulfate: step 1/3. In terms of biological role, with CysN forms the ATP sulfurylase (ATPS) that catalyzes the adenylation of sulfate producing adenosine 5'-phosphosulfate (APS) and diphosphate, the first enzymatic step in sulfur assimilation pathway. APS synthesis involves the formation of a high-energy phosphoric-sulfuric acid anhydride bond driven by GTP hydrolysis by CysN coupled to ATP hydrolysis by CysD. The polypeptide is Sulfate adenylyltransferase subunit 2 (Brucella anthropi (strain ATCC 49188 / DSM 6882 / CCUG 24695 / JCM 21032 / LMG 3331 / NBRC 15819 / NCTC 12168 / Alc 37) (Ochrobactrum anthropi)).